We begin with the raw amino-acid sequence, 337 residues long: Biotin synthase (337 aa).

In terms of domain architecture, Radical SAM core spans Tyr55–Lys284. 3 residues coordinate [4Fe-4S] cluster: Cys73, Cys77, and Cys80. Residues Cys117, Cys149, and Cys209 each contribute to the [2Fe-2S] cluster site.

This sequence belongs to the radical SAM superfamily. Biotin synthase family. Homodimer. Requires [4Fe-4S] cluster as cofactor. It depends on [2Fe-2S] cluster as a cofactor.

The enzyme catalyses (4R,5S)-dethiobiotin + (sulfur carrier)-SH + 2 reduced [2Fe-2S]-[ferredoxin] + 2 S-adenosyl-L-methionine = (sulfur carrier)-H + biotin + 2 5'-deoxyadenosine + 2 L-methionine + 2 oxidized [2Fe-2S]-[ferredoxin]. The protein operates within cofactor biosynthesis; biotin biosynthesis; biotin from 7,8-diaminononanoate: step 2/2. Functionally, catalyzes the conversion of dethiobiotin (DTB) to biotin by the insertion of a sulfur atom into dethiobiotin via a radical-based mechanism. This chain is Biotin synthase, found in Caldicellulosiruptor bescii (strain ATCC BAA-1888 / DSM 6725 / KCTC 15123 / Z-1320) (Anaerocellum thermophilum).